The chain runs to 71 residues: Translation initiation factor IF-1 (71 aa).

The S1-like domain occupies Met1–His71.

Belongs to the IF-1 family. In terms of assembly, component of the 30S ribosomal translation pre-initiation complex which assembles on the 30S ribosome in the order IF-2 and IF-3, IF-1 and N-formylmethionyl-tRNA(fMet); mRNA recruitment can occur at any time during PIC assembly.

The protein resides in the cytoplasm. In terms of biological role, one of the essential components for the initiation of protein synthesis. Stabilizes the binding of IF-2 and IF-3 on the 30S subunit to which N-formylmethionyl-tRNA(fMet) subsequently binds. Helps modulate mRNA selection, yielding the 30S pre-initiation complex (PIC). Upon addition of the 50S ribosomal subunit IF-1, IF-2 and IF-3 are released leaving the mature 70S translation initiation complex. The polypeptide is Translation initiation factor IF-1 (Rickettsia akari (strain Hartford)).